We begin with the raw amino-acid sequence, 256 residues long: 4-oxalocrotonate decarboxylase (256 aa).

It belongs to the hydratase/decarboxylase family. As to quaternary structure, forms a complex with AmnF. The cofactor is Mg(2+). It depends on Mn(2+) as a cofactor.

The catalysed reaction is (3E)-2-oxohex-3-enedioate + H(+) = 2-oxopent-4-enoate + CO2. With respect to regulation, strongly inhibited by Fe(2+), Fe(3+), K(3)[Fe(CN)(6)], Ag(+) and Cu(2+). Its function is as follows. Involved in the modified meta-cleavage pathway for the 2-aminophenol catabolism. The sequence is that of 4-oxalocrotonate decarboxylase (amnE) from Pseudomonas sp.